Reading from the N-terminus, the 447-residue chain is UDP-N-acetylglucosamine 1-carboxyvinyltransferase (447 aa).

A phosphoenolpyruvate-binding site is contributed by 27-28 (KN). A UDP-N-acetyl-alpha-D-glucosamine-binding site is contributed by Arg-97. The active-site Proton donor is Cys-121. At Cys-121 the chain carries 2-(S-cysteinyl)pyruvic acid O-phosphothioketal. UDP-N-acetyl-alpha-D-glucosamine is bound by residues 126–130 (RPVDL), Asp-314, and Val-336.

This sequence belongs to the EPSP synthase family. MurA subfamily.

It localises to the cytoplasm. The enzyme catalyses phosphoenolpyruvate + UDP-N-acetyl-alpha-D-glucosamine = UDP-N-acetyl-3-O-(1-carboxyvinyl)-alpha-D-glucosamine + phosphate. The protein operates within cell wall biogenesis; peptidoglycan biosynthesis. Functionally, cell wall formation. Adds enolpyruvyl to UDP-N-acetylglucosamine. This chain is UDP-N-acetylglucosamine 1-carboxyvinyltransferase, found in Nostoc sp. (strain PCC 7120 / SAG 25.82 / UTEX 2576).